We begin with the raw amino-acid sequence, 93 residues long: Large ribosomal subunit protein mL41 (93 aa).

A mitochondrion-targeting transit peptide spans 1 to 13 (MHQSLLCFGARRL).

The protein belongs to the mitochondrion-specific ribosomal protein mL41 family. As to quaternary structure, component of the mitochondrial large ribosomal subunit (mt-LSU). Mature yeast 74S mitochondrial ribosomes consist of a small (37S) and a large (54S) subunit. The 37S small subunit contains a 15S ribosomal RNA (15S mt-rRNA) and at least 32 different proteins. The 54S large subunit contains a 21S rRNA (21S mt-rRNA) and at least 45 different proteins.

The protein localises to the mitochondrion. Component of the mitochondrial ribosome (mitoribosome), a dedicated translation machinery responsible for the synthesis of mitochondrial genome-encoded proteins, including at least some of the essential transmembrane subunits of the mitochondrial respiratory chain. The mitoribosomes are attached to the mitochondrial inner membrane and translation products are cotranslationally integrated into the membrane. The chain is Large ribosomal subunit protein mL41 (mrpl27) from Schizosaccharomyces pombe (strain 972 / ATCC 24843) (Fission yeast).